A 257-amino-acid chain; its full sequence is Aspartate/glutamate leucyltransferase (257 aa).

It belongs to the R-transferase family. Bpt subfamily.

The protein localises to the cytoplasm. The enzyme catalyses N-terminal L-glutamyl-[protein] + L-leucyl-tRNA(Leu) = N-terminal L-leucyl-L-glutamyl-[protein] + tRNA(Leu) + H(+). It carries out the reaction N-terminal L-aspartyl-[protein] + L-leucyl-tRNA(Leu) = N-terminal L-leucyl-L-aspartyl-[protein] + tRNA(Leu) + H(+). Its function is as follows. Functions in the N-end rule pathway of protein degradation where it conjugates Leu from its aminoacyl-tRNA to the N-termini of proteins containing an N-terminal aspartate or glutamate. This Sphingopyxis alaskensis (strain DSM 13593 / LMG 18877 / RB2256) (Sphingomonas alaskensis) protein is Aspartate/glutamate leucyltransferase.